Here is a 71-residue protein sequence, read N- to C-terminus: Antitoxin ParD2 (71 aa).

Functionally, antitoxin component of a type II toxin-antitoxin (TA) system. This chain is Antitoxin ParD2 (parD2), found in Mycobacterium tuberculosis (strain CDC 1551 / Oshkosh).